A 458-amino-acid polypeptide reads, in one-letter code: MAKTKSKFICQSCGYESPKWMGKCPGCGAWNTMVEEMIKKAPANRRAAFSHSVQTVQKPSPITSIETSEEPRVKTQLGEFNRVLGGGVVKGSLVLIGGDPGIGKSTLLLQVSAQLSGSSNSVLYISGEESVKQTKLRADRLGINNPSLHVLSETDMEYISSAIQEMNPSFVVVDSIQTVYQSDITSAPGSVSQVRECTAELMKIAKTKGIPIFIVGHVTKEGSIAGPRLLEHMVDTVLYFEGERHHTFRILRAVKNRFGSTNEMGIFEMREEGLTEVLNPSEIFLEERSAGSAGSSITASMEGTRPILVEIQALISPTSFGNPRRMATGIDHNRVSLLMAVLEKRVGLLLQNQDAYLKVAGGVKLDEPAIDLAIVISIASSFRDTPPNPADCFIGEVGLTGEVRRVSRIEQRVKEAAKLGFKRMIIPAANLDGWTKPKGIEVIGVANVAEALRTSLGG.

The C4-type zinc-finger motif lies at 10–27 (CQSCGYESPKWMGKCPGC). Residue 98–105 (GDPGIGKS) coordinates ATP. The RadA KNRFG motif signature appears at 255-259 (KNRFG). Residues 354 to 458 (DAYLKVAGGV…AEALRTSLGG (105 aa)) are lon-protease-like.

The protein belongs to the RecA family. RadA subfamily. As to quaternary structure, interacts with DisA.

DNA-dependent ATPase involved in processing of recombination intermediates, plays a role in repairing DNA breaks. Stimulates the branch migration of RecA-mediated strand transfer reactions, allowing the 3' invading strand to extend heteroduplex DNA faster. Binds ssDNA in the presence of ADP but not other nucleotides, has ATPase activity that is stimulated by ssDNA and various branched DNA structures, but inhibited by SSB. Does not have RecA's homology-searching function. Its function is as follows. Plays a role in DNA repair. Might stabilize or process Holliday junction intermediates. May work with DisA following methyl methanesulfonate (MMS) but not H(2)O(2) damage; DisA is a DNA integrity scanning protein with c-di-AMP synthase activity. This is DNA repair protein RadA from Bacillus subtilis (strain 168).